Here is a 463-residue protein sequence, read N- to C-terminus: Toxin CaTX-A (463 aa).

Residues M1–A18 form the signal peptide.

It belongs to the jellyfish toxin family. Type II subfamily. In terms of assembly, oligomer. Post-translationally, contains disulfide bonds. In terms of tissue distribution, it is suggested that CaTX-B is synthesized in the tentacle, is modified (become CaTX-A) and then migrates to the nematocyst.

It localises to the secreted. It is found in the nematocyst. Its subcellular location is the target cell membrane. Has potent hemolytic activity. Is lethal to crayfish. Causes cutaneous inflammation in humans. May act as a pore-forming toxin, disrupting normal transmembrane ion concentration gradients in susceptible cells. This chain is Toxin CaTX-A, found in Carybdea alata (Hawaiian box jellyfish).